A 392-amino-acid chain; its full sequence is Na(+)/H(+) antiporter NhaA 2 (392 aa).

The next 11 membrane-spanning stretches (helical) occupy residues 20–40 (FFAA…AALI), 63–83 (VEHW…GLEI), 99–119 (ALPG…YVAF), 127–147 (IGGW…VLSL), 158–178 (IFLS…IALF), 181–201 (SDLS…LVAL), 209–229 (LLPY…SGIH), 265–285 (VAFA…LSGI), 298–318 (VALG…ALAI), 336–356 (GVAA…ALAF), and 365–385 (EVKV…VVVL).

The protein belongs to the NhaA Na(+)/H(+) (TC 2.A.33) antiporter family.

The protein localises to the cell inner membrane. It catalyses the reaction Na(+)(in) + 2 H(+)(out) = Na(+)(out) + 2 H(+)(in). Functionally, na(+)/H(+) antiporter that extrudes sodium in exchange for external protons. This Pseudomonas savastanoi pv. phaseolicola (strain 1448A / Race 6) (Pseudomonas syringae pv. phaseolicola (strain 1448A / Race 6)) protein is Na(+)/H(+) antiporter NhaA 2.